The sequence spans 337 residues: Putative 2-aminoethylphosphonate-binding periplasmic protein (337 aa).

Residues 1 to 21 (MKLSRLALLSVFALASAPSWA) form the signal peptide.

The protein belongs to the bacterial solute-binding protein 1 family.

Its subcellular location is the periplasm. In terms of biological role, probably part of the PhnSTUV complex (TC 3.A.1.11.5) involved in 2-aminoethylphosphonate import. The chain is Putative 2-aminoethylphosphonate-binding periplasmic protein (phnS) from Salmonella paratyphi A (strain ATCC 9150 / SARB42).